The primary structure comprises 175 residues: CDP-archaeol synthase (175 aa).

The next 4 helical transmembrane spans lie at G41–F61, L82–F102, F122–F142, and V150–V170.

It belongs to the CDP-archaeol synthase family. The cofactor is Mg(2+).

It is found in the cell membrane. The catalysed reaction is 2,3-bis-O-(geranylgeranyl)-sn-glycerol 1-phosphate + CTP + H(+) = CDP-2,3-bis-O-(geranylgeranyl)-sn-glycerol + diphosphate. It participates in membrane lipid metabolism; glycerophospholipid metabolism. In terms of biological role, catalyzes the formation of CDP-2,3-bis-(O-geranylgeranyl)-sn-glycerol (CDP-archaeol) from 2,3-bis-(O-geranylgeranyl)-sn-glycerol 1-phosphate (DGGGP) and CTP. This reaction is the third ether-bond-formation step in the biosynthesis of archaeal membrane lipids. The sequence is that of CDP-archaeol synthase from Methanosarcina mazei (strain ATCC BAA-159 / DSM 3647 / Goe1 / Go1 / JCM 11833 / OCM 88) (Methanosarcina frisia).